Reading from the N-terminus, the 249-residue chain is Putative SAP domain-containing protein 049L (249 aa).

3 stretches are compositionally biased toward basic and acidic residues: residues 1-12 (MAAPKAEGEDKP), 22-38 (PKPE…KEFC), and 95-107 (KKAE…KLDE). The tract at residues 1–110 (MAAPKAEGED…DDKKLDEATG (110 aa)) is disordered. An SAP domain is found at 119–153 (LSKLTIQTLKGMCKTRNLKISGNKAALVQRLIEAD).

The polypeptide is Putative SAP domain-containing protein 049L (Frog virus 3 (isolate Goorha) (FV-3)).